The following is a 305-amino-acid chain: MLDTSIQALINKWQKYLALQRNYSNHTVISYNNDLKHFLEFMNYYNSELVTINHIKTADIRLIRSWLAKRNCDNFTASSISRGLSAVKNFYRFLEKTTQLNSHIIFSIKSPKKTKLLPKALSEDDVVISLEHIEEYGNVKWVELRNKALLVLIYASGLRISEALSITKLHLQNLEFIRIIGKGSKERIIPWLPIAKNLITQYLEILPYKLGDNEPIFRGKQGKKLQPPVFNRELIKLKHFYGLPQHLTAHSFRHSFASHLLEHGADLRSLQELLGHKSLSTTQNYTKTSIKHLEAVYTTAYPIKK.

One can recognise a Core-binding (CB) domain in the interval 4–95 (TSIQALINKW…AVKNFYRFLE (92 aa)). In terms of domain architecture, Tyr recombinase spans 116–298 (LLPKALSEDD…SIKHLEAVYT (183 aa)). Residues arginine 159, lysine 182, histidine 250, arginine 253, and histidine 276 contribute to the active site. Tyrosine 285 acts as the O-(3'-phospho-DNA)-tyrosine intermediate in catalysis.

Belongs to the 'phage' integrase family. XerC subfamily. Forms a cyclic heterotetrameric complex composed of two molecules of XerC and two molecules of XerD.

Its subcellular location is the cytoplasm. Functionally, site-specific tyrosine recombinase, which acts by catalyzing the cutting and rejoining of the recombining DNA molecules. The XerC-XerD complex is essential to convert dimers of the bacterial chromosome into monomers to permit their segregation at cell division. It also contributes to the segregational stability of plasmids. This Rickettsia conorii (strain ATCC VR-613 / Malish 7) protein is Tyrosine recombinase XerC.